We begin with the raw amino-acid sequence, 391 residues long: Elongation factor Tu 1 (391 aa).

Positions 10-201 constitute a tr-type G domain; that stretch reads KPHVNIGTIG…AVDSYIPTPE (192 aa). Positions 19-26 are G1; the sequence is GHVDHGKT. 19–26 contacts GTP; that stretch reads GHVDHGKT. A Mg(2+)-binding site is contributed by Thr-26. Residues 55–59 form a G2 region; sequence GITIS. The tract at residues 76-79 is G3; the sequence is DCPG. Residues 76–80 and 131–134 each bind GTP; these read DCPGH and NKVD. Positions 131–134 are G4; that stretch reads NKVD. Residues 169–171 are G5; sequence SAL.

The protein belongs to the TRAFAC class translation factor GTPase superfamily. Classic translation factor GTPase family. EF-Tu/EF-1A subfamily. In terms of assembly, monomer.

It localises to the cytoplasm. It catalyses the reaction GTP + H2O = GDP + phosphate + H(+). GTP hydrolase that promotes the GTP-dependent binding of aminoacyl-tRNA to the A-site of ribosomes during protein biosynthesis. The chain is Elongation factor Tu 1 from Rhizobium etli (strain ATCC 51251 / DSM 11541 / JCM 21823 / NBRC 15573 / CFN 42).